Here is a 419-residue protein sequence, read N- to C-terminus: Erythromycin esterase type II (419 aa).

Its function is as follows. This enzyme confers resistance to erythromycin through inactivation by hydrolyzing the lactone ring of the antibiotic. This is Erythromycin esterase type II (ereB) from Escherichia coli.